The following is a 213-amino-acid chain: tRNA (guanine-N(7)-)-methyltransferase (213 aa).

Positions 38, 63, 91, and 113 each coordinate S-adenosyl-L-methionine. Aspartate 113 is a catalytic residue. Substrate is bound by residues lysine 117, aspartate 149, and 192 to 195 (TEYE).

The protein belongs to the class I-like SAM-binding methyltransferase superfamily. TrmB family.

It catalyses the reaction guanosine(46) in tRNA + S-adenosyl-L-methionine = N(7)-methylguanosine(46) in tRNA + S-adenosyl-L-homocysteine. The protein operates within tRNA modification; N(7)-methylguanine-tRNA biosynthesis. In terms of biological role, catalyzes the formation of N(7)-methylguanine at position 46 (m7G46) in tRNA. In Mycoplasmoides gallisepticum (strain R(low / passage 15 / clone 2)) (Mycoplasma gallisepticum), this protein is tRNA (guanine-N(7)-)-methyltransferase.